The sequence spans 629 residues: tRNA uridine 5-carboxymethylaminomethyl modification enzyme MnmG (629 aa).

FAD contacts are provided by residues 13–18, V125, and S180; that span reads GGGHAG. An NAD(+)-binding site is contributed by 273–287; it reads GPRYCPSIEDKVMRF. Position 370 (Q370) interacts with FAD.

This sequence belongs to the MnmG family. Homodimer. Heterotetramer of two MnmE and two MnmG subunits. FAD serves as cofactor.

The protein resides in the cytoplasm. NAD-binding protein involved in the addition of a carboxymethylaminomethyl (cmnm) group at the wobble position (U34) of certain tRNAs, forming tRNA-cmnm(5)s(2)U34. This is tRNA uridine 5-carboxymethylaminomethyl modification enzyme MnmG from Shigella dysenteriae serotype 1 (strain Sd197).